A 657-amino-acid polypeptide reads, in one-letter code: Iron-sulfur cluster biogenesis chaperone, mitochondrial (657 aa).

This sequence belongs to the heat shock protein 70 family. As to quaternary structure, interacts with the Fe/S cluster assembly proteins ISU1, MGE1, GRX5 and JAC1.

The protein localises to the mitochondrion matrix. The catalysed reaction is ATP + H2O = ADP + phosphate + H(+). In terms of biological role, required for the assembly of iron-sulfur (Fe/S) clusters in mitochondria. Assisted by the DnaJ-like co-chaperone JAC1 and the nucleotide exchange factor MGE1, it mediates ATP-dependent Fe-S cluster transfer from the scaffold proteins ISU1/ISU2 to GRX5. The protein is Iron-sulfur cluster biogenesis chaperone, mitochondrial of Saccharomyces cerevisiae (strain ATCC 204508 / S288c) (Baker's yeast).